Reading from the N-terminus, the 370-residue chain is Putative agmatine deiminase (370 aa).

The active-site Amidino-cysteine intermediate is the Cys361.

Belongs to the agmatine deiminase family.

The enzyme catalyses agmatine + H2O = N-carbamoylputrescine + NH4(+). The polypeptide is Putative agmatine deiminase (Shewanella sp. (strain MR-4)).